Reading from the N-terminus, the 179-residue chain is Large ribosomal subunit protein uL10 (179 aa).

The protein belongs to the universal ribosomal protein uL10 family. Part of the ribosomal stalk of the 50S ribosomal subunit. The N-terminus interacts with L11 and the large rRNA to form the base of the stalk. The C-terminus forms an elongated spine to which L12 dimers bind in a sequential fashion forming a multimeric L10(L12)X complex.

Forms part of the ribosomal stalk, playing a central role in the interaction of the ribosome with GTP-bound translation factors. The sequence is that of Large ribosomal subunit protein uL10 from Thermomicrobium roseum (strain ATCC 27502 / DSM 5159 / P-2).